The chain runs to 104 residues: Small ribosomal subunit protein uS10 (104 aa).

This sequence belongs to the universal ribosomal protein uS10 family. Part of the 30S ribosomal subunit.

Functionally, involved in the binding of tRNA to the ribosomes. This Thermosynechococcus vestitus (strain NIES-2133 / IAM M-273 / BP-1) protein is Small ribosomal subunit protein uS10.